Reading from the N-terminus, the 655-residue chain is Epithelial sodium channel subunit alpha (655 aa).

Topologically, residues 1–55 are cytoplasmic; sequence MTDKEEEAEGGKKKEPMIGFYDSYQELFEFFCNNTTIHGTIRMVCSKHNNMKTVS. Residues 56–76 form a helical membrane-spanning segment; the sequence is WTILFITTFGVMYWQFGLLLG. Residues 77-531 are Extracellular-facing; the sequence is QYYSYPVSIT…SQWSLWFGSS (455 aa). Intrachain disulfides connect cysteine 102/cysteine 275, cysteine 199/cysteine 206, cysteine 252/cysteine 259, cysteine 364/cysteine 448, cysteine 385/cysteine 425, cysteine 385/cysteine 444, cysteine 389/cysteine 440, cysteine 398/cysteine 425, cysteine 398/cysteine 448, and cysteine 400/cysteine 414. A helical transmembrane segment spans residues 532 to 552; that stretch reads VLSVVEMGELVFDLIAVGVIV. The Cytoplasmic segment spans residues 553-655; it reads LRRRRREKCQ…QEASEGPTVL (103 aa). Residues 561–587 are disordered; that stretch reads CQASSDGEGTSDSTAGTHRGQENASRS. The segment covering 562 to 586 has biased composition (polar residues); the sequence is QASSDGEGTSDSTAGTHRGQENASR.

Belongs to the amiloride-sensitive sodium channel (TC 1.A.6) family. SCNN1A subfamily. Heterotrimer; containing an alpha/SCNN1A, a beta/SCNN1B and a gamma/SCNN1G subunit. Strongly expressed in gill, kidney and rectum (at protein level). More weakly expressed in muscle, brain, heart, liver and intestine.

The protein resides in the apical cell membrane. It is found in the cell projection. Its subcellular location is the cilium. It localises to the cytoplasmic granule. The protein localises to the cytoplasm. The protein resides in the cytoplasmic vesicle. It is found in the secretory vesicle. Its subcellular location is the acrosome. It localises to the flagellum. The enzyme catalyses Na(+)(in) = Na(+)(out). Its activity is regulated as follows. Originally identified and characterized by its inhibition by the diuretic drug amiloride. Functionally, this is one of the three pore-forming subunits of the heterotrimeric epithelial sodium channel (ENaC), a critical regulator of sodium balance and fluid homeostasis. ENaC operates in epithelial tissues, where it mediates the electrodiffusion of sodium ions from extracellular fluid through the apical membrane of cells, with water following osmotically. The polypeptide is Epithelial sodium channel subunit alpha (scnn1a) (Neoceratodus forsteri (Australian lungfish)).